Here is a 183-residue protein sequence, read N- to C-terminus: Large ribosomal subunit protein uL6 (183 aa).

The protein belongs to the universal ribosomal protein uL6 family. In terms of assembly, part of the 50S ribosomal subunit.

Functionally, this protein binds to the 23S rRNA, and is important in its secondary structure. It is located near the subunit interface in the base of the L7/L12 stalk, and near the tRNA binding site of the peptidyltransferase center. This is Large ribosomal subunit protein uL6 from Chlamydia muridarum (strain MoPn / Nigg).